A 69-amino-acid polypeptide reads, in one-letter code: Large ribosomal subunit protein bL31 (69 aa).

Belongs to the bacterial ribosomal protein bL31 family. Type A subfamily. In terms of assembly, part of the 50S ribosomal subunit.

Its function is as follows. Binds the 23S rRNA. The polypeptide is Large ribosomal subunit protein bL31 (Magnetococcus marinus (strain ATCC BAA-1437 / JCM 17883 / MC-1)).